The chain runs to 393 residues: Acetylornithine aminotransferase 1 (393 aa).

Residue arginine 131 participates in N(2)-acetyl-L-ornithine binding. 215 to 218 (DEVQ) lines the pyridoxal 5'-phosphate pocket. An N6-(pyridoxal phosphate)lysine modification is found at lysine 244. Position 272 (threonine 272) interacts with N(2)-acetyl-L-ornithine. Threonine 273 contributes to the pyridoxal 5'-phosphate binding site.

The protein belongs to the class-III pyridoxal-phosphate-dependent aminotransferase family. ArgD subfamily. As to quaternary structure, homodimer. It depends on pyridoxal 5'-phosphate as a cofactor.

The protein localises to the cytoplasm. It catalyses the reaction N(2)-acetyl-L-ornithine + 2-oxoglutarate = N-acetyl-L-glutamate 5-semialdehyde + L-glutamate. The protein operates within amino-acid biosynthesis; L-arginine biosynthesis; N(2)-acetyl-L-ornithine from L-glutamate: step 4/4. In Bordetella pertussis (strain Tohama I / ATCC BAA-589 / NCTC 13251), this protein is Acetylornithine aminotransferase 1.